The sequence spans 269 residues: Formamidopyrimidine-DNA glycosylase (269 aa).

The active-site Schiff-base intermediate with DNA is Pro2. The active-site Proton donor is the Glu3. The active-site Proton donor; for beta-elimination activity is Lys57. 3 residues coordinate DNA: His90, Arg109, and Lys150. The segment at 235-269 (QVYGRKGEPCRVCGTPIVATKHAQRATFYCRHCQK) adopts an FPG-type zinc-finger fold. The active-site Proton donor; for delta-elimination activity is Arg259.

Belongs to the FPG family. Monomer. The cofactor is Zn(2+).

The catalysed reaction is Hydrolysis of DNA containing ring-opened 7-methylguanine residues, releasing 2,6-diamino-4-hydroxy-5-(N-methyl)formamidopyrimidine.. The enzyme catalyses 2'-deoxyribonucleotide-(2'-deoxyribose 5'-phosphate)-2'-deoxyribonucleotide-DNA = a 3'-end 2'-deoxyribonucleotide-(2,3-dehydro-2,3-deoxyribose 5'-phosphate)-DNA + a 5'-end 5'-phospho-2'-deoxyribonucleoside-DNA + H(+). Its function is as follows. Involved in base excision repair of DNA damaged by oxidation or by mutagenic agents. Acts as a DNA glycosylase that recognizes and removes damaged bases. Has a preference for oxidized purines, such as 7,8-dihydro-8-oxoguanine (8-oxoG). Has AP (apurinic/apyrimidinic) lyase activity and introduces nicks in the DNA strand. Cleaves the DNA backbone by beta-delta elimination to generate a single-strand break at the site of the removed base with both 3'- and 5'-phosphates. This is Formamidopyrimidine-DNA glycosylase from Salmonella newport (strain SL254).